Here is a 2052-residue protein sequence, read N- to C-terminus: Unconventional myosin-X (2052 aa).

An N-acetylmethionine modification is found at Met1. Residues 63–739 (EGVDDMATLT…LEQKLEKRQE (677 aa)) form the Myosin motor domain. ATP-binding positions include Asn104, Tyr113, 160–165 (GAGKTE), and Asn215. The segment at 619–641 (LHSLMATLSASNPFFVRCIKPNM) is actin-binding. IQ domains lie at 742–763 (VTRA…KQYK), 764–787 (KVLD…RFLH), and 788–817 (LKKA…EKRA). The segment at 814–884 (EKRAEEEKRK…LSRELEKQKE (71 aa)) is SAH. The tract at residues 819–843 (EEKRKREEEEKRKREEEERERERER) is disordered. Positions 885-935 (NKQVEEILRLEKEIEDLQRMKERQELSLTEASLQKLQQLRDEELRRLEDEA) form a coiled coil. 2 positions are modified to phosphoserine: Ser963 and Ser966. A disordered region spans residues 964-1093 (VGSGCTGEQG…DYDQDDYEDG (130 aa)). The span at 988 to 1003 (PEEEEVDEGFEADDDA) shows a compositional bias: acidic residues. Positions 1040–1049 (VVPTSPSADS) are enriched in polar residues. Over residues 1081-1092 (GDYDYDQDDYED) the composition is skewed to acidic residues. Thr1152 is modified (phosphothreonine). PH domains lie at 1206–1304 (EALK…QVHA) and 1386–1491 (EFIV…NVTD). The 149-residue stretch at 1541 to 1689 (LPYGDINLNL…PSRDEIEALI (149 aa)) folds into the MyTH4 domain. The 345-residue stretch at 1694–2038 (MTSTVHCHGG…AYISMIVKKR (345 aa)) folds into the FERM domain.

Belongs to the TRAFAC class myosin-kinesin ATPase superfamily. Myosin family. In terms of assembly, monomer, when in an inactive conformation in the cytosol. Homodimer in its active, membrane-bound conformation; antiparallel coiled coil-mediated dimer formation. Interacts with ECPAS. Interacts with NEO 1. Interacts with VASP. Interacts with DCC and ITGB5; the presence of DCC inhibits ITGB5 binding. Interacts with tubulin; ITGB5 or DCC binding inhibits tubulin binding. Interacts strongly with CALM3 and weakly with CALM, the CALM3 interaction is essential for function in filopodial extension and motility. Interacts with ITGB1, ITGB3 and ITGB5. In terms of tissue distribution, detected in kidney, testis, liver, kidney, cerebellum and brain cortex (at protein level).

The protein resides in the cytoplasm. It is found in the cytosol. Its subcellular location is the cell projection. The protein localises to the lamellipodium. It localises to the ruffle. The protein resides in the cytoskeleton. It is found in the filopodium tip. Its subcellular location is the cell cortex. The protein localises to the filopodium membrane. In terms of biological role, myosins are actin-based motor molecules with ATPase activity. Unconventional myosins serve in intracellular movements. MYO10 binds to actin filaments and actin bundles and functions as a plus end-directed motor. Moves with higher velocity and takes larger steps on actin bundles than on single actin filaments. The tail domain binds to membranous compartments containing phosphatidylinositol 3,4,5-trisphosphate, which are then moved relative to actin filaments. Regulates cell shape, cell spreading and cell adhesion. Stimulates the formation and elongation of filopodia. In hippocampal neurons it induces the formation of dendritic filopodia by trafficking the actin-remodeling protein VASP to the tips of filopodia, where it promotes actin elongation. Plays a role in formation of the podosome belt in osteoclasts. The protein is Unconventional myosin-X (MYO10) of Bos taurus (Bovine).